The sequence spans 110 residues: Cell cycle protein GpsB (110 aa).

The stretch at 32-73 forms a coiled coil; sequence LDDVIKDYENYLEQIEKLQMENRRLQQALDKKESEASNVRNS.

Belongs to the GpsB family. Forms polymers through the coiled coil domains. Interacts with PBP1, MreC and EzrA.

Its subcellular location is the cytoplasm. Functionally, divisome component that associates with the complex late in its assembly, after the Z-ring is formed, and is dependent on DivIC and PBP2B for its recruitment to the divisome. Together with EzrA, is a key component of the system that regulates PBP1 localization during cell cycle progression. Its main role could be the removal of PBP1 from the cell pole after pole maturation is completed. Also contributes to the recruitment of PBP1 to the division complex. Not essential for septum formation. This chain is Cell cycle protein GpsB, found in Streptococcus agalactiae serotype Ia (strain ATCC 27591 / A909 / CDC SS700).